The following is a 660-amino-acid chain: UvrABC system protein B (660 aa).

The Helicase ATP-binding domain maps to 27 to 414 (NGVNEGKRHQ…TDEMVQQIIR (388 aa)). 40–47 (GATGTGKT) lines the ATP pocket. The short motif at 93-116 (YYDYYQPEAYVPSTDTFIEKDASI) is the Beta-hairpin element. Residues 431–593 (QIDDLLGEIQ…ITPTTINKKI (163 aa)) form the Helicase C-terminal domain. The tract at residues 603-622 (NDETNEQQQTEVPKKMTKKE) is disordered. The region spanning 624-659 (EKTIANIEKEMKQAAKDLDFEKATELRDMLFELKAE) is the UVR domain.

It belongs to the UvrB family. Forms a heterotetramer with UvrA during the search for lesions. Interacts with UvrC in an incision complex.

It localises to the cytoplasm. In terms of biological role, the UvrABC repair system catalyzes the recognition and processing of DNA lesions. A damage recognition complex composed of 2 UvrA and 2 UvrB subunits scans DNA for abnormalities. Upon binding of the UvrA(2)B(2) complex to a putative damaged site, the DNA wraps around one UvrB monomer. DNA wrap is dependent on ATP binding by UvrB and probably causes local melting of the DNA helix, facilitating insertion of UvrB beta-hairpin between the DNA strands. Then UvrB probes one DNA strand for the presence of a lesion. If a lesion is found the UvrA subunits dissociate and the UvrB-DNA preincision complex is formed. This complex is subsequently bound by UvrC and the second UvrB is released. If no lesion is found, the DNA wraps around the other UvrB subunit that will check the other stand for damage. The polypeptide is UvrABC system protein B (Staphylococcus saprophyticus subsp. saprophyticus (strain ATCC 15305 / DSM 20229 / NCIMB 8711 / NCTC 7292 / S-41)).